We begin with the raw amino-acid sequence, 561 residues long: Potassium-transporting ATPase potassium-binding subunit (561 aa).

A run of 12 helical transmembrane segments spans residues 5–25, 60–80, 86–106, 130–150, 177–197, 247–267, 281–301, 324–344, 376–396, 415–435, 491–511, and 533–553; these read LAAGLQIAFVLAVLAIAYVPV, YGYAASVLGFSLASALFLYFL, VLPLSDGLSGVSPAVAFNTAI, VGLAVQNFVSAAVGMAVAIAL, ILLPFSFVIALILLSQGVIQS, PTPLSNIVEILAILLIPVCLT, LTLLAVMGILWSGLLAVTLAA, FGIPGSALFAVATTGTSTGAV, GLYGILVLALIAVFVGGLLVG, ALSILVMPALVLIGTAITVIL, ICMLLGRFLPIIFVLALAGAL, and GLLTGTVVLVAALTFFPALAL.

This sequence belongs to the KdpA family. As to quaternary structure, the system is composed of three essential subunits: KdpA, KdpB and KdpC.

The protein localises to the cell membrane. Functionally, part of the high-affinity ATP-driven potassium transport (or Kdp) system, which catalyzes the hydrolysis of ATP coupled with the electrogenic transport of potassium into the cytoplasm. This subunit binds the extracellular potassium ions and delivers the ions to the membrane domain of KdpB through an intramembrane tunnel. This Rhodococcus erythropolis (strain PR4 / NBRC 100887) protein is Potassium-transporting ATPase potassium-binding subunit.